The chain runs to 402 residues: Transcription regulatory protein OpdE (402 aa).

12 helical membrane passes run 22–42, 60–80, 86–106, 108–128, 147–167, 170–190, 220–240, 256–276, 296–316, 318–338, 348–368, and 375–395; these read VLAI…PVSL, GIAI…SVAG, TLLL…ALAP, YFVY…FWSM, ALVN…GAWL, LIGW…ALAW, PGVM…FSLF, AHVS…TLLI, ALIA…VVLL, LWGL…ARVF, LFVA…GLLF, and ATFF…ILTA.

The protein to B.subtilis YwfA.

Its subcellular location is the cell membrane. Regulates the expression of oprD which encodes the imipenem-specific porin. The polypeptide is Transcription regulatory protein OpdE (opdE) (Pseudomonas aeruginosa (strain ATCC 15692 / DSM 22644 / CIP 104116 / JCM 14847 / LMG 12228 / 1C / PRS 101 / PAO1)).